Here is a 159-residue protein sequence, read N- to C-terminus: Histone H1 (159 aa).

Disordered regions lie at residues 1–31 (MAEK…ITEL), 80–99 (KGAE…KKEK), and 132–159 (AAKK…KKKS). Basic residues predominate over residues 10–22 (VTTKKPAATHRRR). An H15 domain is found at 12–102 (TKKPAATHRR…GEGKKEKEKA (91 aa)). Over residues 84 to 93 (CAGGQGTGVG) the composition is skewed to gly residues. Basic residues predominate over residues 134-148 (KKVKAAPKKAKKPVK). Over residues 149-159 (KTTEKKEKKKS) the composition is skewed to basic and acidic residues.

This sequence belongs to the histone H1/H5 family.

The protein localises to the nucleus. It is found in the chromosome. Functionally, histones H1 are necessary for the condensation of nucleosome chains into higher-order structures. This chain is Histone H1, found in Psammechinus miliaris (Green sea urchin).